A 261-amino-acid polypeptide reads, in one-letter code: uncharacterized protein (261 aa).

Positions 7–122 constitute a Response regulatory domain; the sequence is TAVLADDEPL…RLASCCEKLQ (116 aa). A 4-aspartylphosphate modification is found at D54. The HTH LytTR-type domain occupies 157–261; it reads LKASKGEEIH…RALQHLFKVS (105 aa).

This is an uncharacterized protein from Vibrio cholerae serotype O1 (strain ATCC 39315 / El Tor Inaba N16961).